A 515-amino-acid chain; its full sequence is ATP synthase subunit alpha (515 aa).

Residue 171–178 participates in ATP binding; it reads GDRQTGKT.

Belongs to the ATPase alpha/beta chains family. F-type ATPases have 2 components, CF(1) - the catalytic core - and CF(0) - the membrane proton channel. CF(1) has five subunits: alpha(3), beta(3), gamma(1), delta(1), epsilon(1). CF(0) has three main subunits: a(1), b(2) and c(9-12). The alpha and beta chains form an alternating ring which encloses part of the gamma chain. CF(1) is attached to CF(0) by a central stalk formed by the gamma and epsilon chains, while a peripheral stalk is formed by the delta and b chains.

Its subcellular location is the cell inner membrane. The catalysed reaction is ATP + H2O + 4 H(+)(in) = ADP + phosphate + 5 H(+)(out). In terms of biological role, produces ATP from ADP in the presence of a proton gradient across the membrane. The alpha chain is a regulatory subunit. The polypeptide is ATP synthase subunit alpha (Xanthomonas campestris pv. campestris (strain 8004)).